The chain runs to 244 residues: Ribosomal RNA large subunit methyltransferase E (244 aa).

Residues Gly81, Trp83, Asp109, Asp125, and Asp149 each coordinate S-adenosyl-L-methionine. Lys189 (proton acceptor) is an active-site residue.

This sequence belongs to the class I-like SAM-binding methyltransferase superfamily. RNA methyltransferase RlmE family.

The protein localises to the cytoplasm. It catalyses the reaction uridine(2552) in 23S rRNA + S-adenosyl-L-methionine = 2'-O-methyluridine(2552) in 23S rRNA + S-adenosyl-L-homocysteine + H(+). Its function is as follows. Specifically methylates the uridine in position 2552 of 23S rRNA at the 2'-O position of the ribose in the fully assembled 50S ribosomal subunit. The polypeptide is Ribosomal RNA large subunit methyltransferase E (Cereibacter sphaeroides (strain ATCC 17029 / ATH 2.4.9) (Rhodobacter sphaeroides)).